The primary structure comprises 336 residues: MDEIQDIEGLTRRALQAISRIDTLRDLTKLKNDNLGSTSWLAKYSASIKILSQEKKPIIGKAVSEARRKILEACQDRDLALRLNAQNEQFTRETLDITALPTRIFPGARHPIHVLQDKILDFFLMRGWSVVEGPELESEWLNFDALNIGPFHPAREESDTIFAEPRSASMLLRTHTSPVQLRALVSNPLPLYCVSSGKVFRSDPLDATHTPVFHQLEGLVCDRNITLGHLKGTVEDLAGYLFGAEVNLRMRCNYFPFTEPSAEFDISRDGIDWTEWGGCGLVNSKVLSMAGIDTVHYTGFAFGFGLERTLQFIHSLSDMRDIVEGDIRFSQQFGLK.

Residue E259 coordinates Mg(2+).

The protein belongs to the class-II aminoacyl-tRNA synthetase family. Phe-tRNA synthetase alpha subunit type 1 subfamily. In terms of assembly, tetramer of two alpha and two beta subunits. The cofactor is Mg(2+).

It localises to the cytoplasm. It carries out the reaction tRNA(Phe) + L-phenylalanine + ATP = L-phenylalanyl-tRNA(Phe) + AMP + diphosphate + H(+). This is Phenylalanine--tRNA ligase alpha subunit from Tropheryma whipplei (strain Twist) (Whipple's bacillus).